The sequence spans 790 residues: IQ motif and ubiquitin-like domain-containing protein (790 aa).

Residues 1 to 17 are compositionally biased toward polar residues; it reads MSNQPKKYETQNIANST. A disordered region spans residues 1-49; the sequence is MSNQPKKYETQNIANSTEESDAFDIVTIPVPSEEPQESDQTEEHESGIE. The region spanning 130-206 is the Ubiquitin-like domain; it reads ATVKVVLIPV…IQVEIFSTNP (77 aa). An IQ domain is found at 337-366; the sequence is RLKAVIVIQTYYRQWHAKIFVEDLRRQKSL.

In terms of assembly, component of the axonemal radial spoke 1 (RS1) complex, at least composed of spoke head proteins RSPH1, RSPH3, RSPH9 and the cilia-specific component RSPH4A or sperm-specific component RSPH6A, spoke stalk proteins RSPH14, DNAJB13, DYDC1, ROPN1L and NME5, and the anchor protein IQUB. Does not appear to be part of radial spoke complexes 2 or 3 (RS2 or RS3). Interacts with CALM1. Interacts with DNAJB13. Interacts with DYNLL2. Interacts with NME5. Interacts with RSPH3. Interacts with RSPH9. Interacts with ZMYND10. Interacts with calmodulin; the interaction occurs in conditions of low but not high calcium.

It localises to the cytoplasm. The protein resides in the cytoskeleton. It is found in the flagellum axoneme. The protein localises to the cell projection. Its subcellular location is the cilium. In terms of biological role, adapter protein that anchors the radial spoke 1 (RS1) complex to the A microtubule of outer doublet microtubules in axonemes. The triple radial spokes (RS1, RS2 and RS3) are required to modulate beating of the sperm flagellum. May play a role in inhibiting signaling via MAPK1/ERK2 and MAPK3/ERK1. Additionally, may play a role in the functioning of cilia. Not required for the functioning of tracheal or ependymal cilia. The sequence is that of IQ motif and ubiquitin-like domain-containing protein (IQUB) from Macaca fascicularis (Crab-eating macaque).